A 299-amino-acid chain; its full sequence is RING-H2 finger protein ATL20 (299 aa).

A helical membrane pass occupies residues Leu-172 to Ile-192. The segment at Cys-253–Arg-295 adopts an RING-type; atypical zinc-finger fold.

This sequence belongs to the RING-type zinc finger family. ATL subfamily.

The protein resides in the membrane. It carries out the reaction S-ubiquitinyl-[E2 ubiquitin-conjugating enzyme]-L-cysteine + [acceptor protein]-L-lysine = [E2 ubiquitin-conjugating enzyme]-L-cysteine + N(6)-ubiquitinyl-[acceptor protein]-L-lysine.. It participates in protein modification; protein ubiquitination. In Arabidopsis thaliana (Mouse-ear cress), this protein is RING-H2 finger protein ATL20 (ATL20).